The following is a 401-amino-acid chain: Heat shock transcription factor, Y-linked (401 aa).

Residues 1–11 (MAHVSSETQDV) show a composition bias toward polar residues. The disordered stretch occupies residues 1-30 (MAHVSSETQDVSPKDELTASEASTRSPLCE). A DNA-binding region spans residues 76–194 (LSLNFPRKLW…PQLLVRVKRR (119 aa)).

The protein belongs to the HSF family. Testis-specific. Present in Sertoli cells and spermatogenic cells (at protein level).

Its subcellular location is the nucleus. The protein localises to the cytoplasm. The chain is Heat shock transcription factor, Y-linked (HSFY1) from Homo sapiens (Human).